The chain runs to 108 residues: Urease subunit beta (108 aa).

Belongs to the urease beta subunit family. Heterotrimer of UreA (gamma), UreB (beta) and UreC (alpha) subunits. Three heterotrimers associate to form the active enzyme.

The protein resides in the cytoplasm. It catalyses the reaction urea + 2 H2O + H(+) = hydrogencarbonate + 2 NH4(+). The protein operates within nitrogen metabolism; urea degradation; CO(2) and NH(3) from urea (urease route): step 1/1. The polypeptide is Urease subunit beta (Chromohalobacter salexigens (strain ATCC BAA-138 / DSM 3043 / CIP 106854 / NCIMB 13768 / 1H11)).